The chain runs to 502 residues: Cyclin-dependent kinase 19 (502 aa).

The residue at position 1 (methionine 1) is an N-acetylmethionine. A Protein kinase domain is found at glutamate 21 to phenylalanine 335. ATP is bound by residues valine 27–valine 35 and lysine 52. Aspartate 151 (proton acceptor) is an active-site residue. The interval leucine 359 to tyrosine 502 is disordered. The span at asparagine 371–proline 392 shows a compositional bias: low complexity. Positions threonine 408–alanine 421 are enriched in gly residues. Over residues glutamine 424–proline 435 the composition is skewed to polar residues. Residue serine 449 is modified to Phosphoserine. A compositionally biased stretch (polar residues) spans tyrosine 458 to tyrosine 467. Positions glutamine 468–serine 496 are enriched in low complexity.

The protein belongs to the protein kinase superfamily. CMGC Ser/Thr protein kinase family. CDC2/CDKX subfamily.

Its subcellular location is the cytoplasm. The protein resides in the perinuclear region. It localises to the nucleus. The enzyme catalyses L-seryl-[protein] + ATP = O-phospho-L-seryl-[protein] + ADP + H(+). It carries out the reaction L-threonyl-[protein] + ATP = O-phospho-L-threonyl-[protein] + ADP + H(+). The protein is Cyclin-dependent kinase 19 (CDK19) of Homo sapiens (Human).